The primary structure comprises 483 residues: Regulatory protein ViaA (483 aa).

Belongs to the ViaA family. Homodimer. Interacts with RavA.

It localises to the cytoplasm. Functionally, component of the RavA-ViaA chaperone complex, which may act on the membrane to optimize the function of some of the respiratory chains. ViaA stimulates the ATPase activity of RavA. In Shigella flexneri serotype 5b (strain 8401), this protein is Regulatory protein ViaA.